Consider the following 472-residue polypeptide: ATP-dependent rRNA helicase rrp3 (472 aa).

Residues 1–52 are disordered; it reads MPAIKKRKIAREAPQQEDHSDSEAHSSASEDAAPNTTEQEQEPSEAPKQAPK. Residues 10–24 show a composition bias toward basic and acidic residues; sequence AREAPQQEDHSDSEA. A Q motif motif is present at residues 52-80; sequence KSFKELGLIEQLCEACDSMGYKAPTAIQA. Positions 83–254 constitute a Helicase ATP-binding domain; it reads IPLALQGRDL…RASLQNPLRV (172 aa). An ATP-binding site is contributed by 96-103; that stretch reads AETGSGKT. The DEAD box motif lies at 202–205; the sequence is DEAD. Residues 282-426 enclose the Helicase C-terminal domain; it reads YLVYLLNEFV…EYPAEKDEVM (145 aa). Residues 443–472 are disordered; the sequence is MKNYDEKKGSRGKKFAKGKRSREDMDQEEG. Positions 452 to 462 are enriched in basic residues; it reads SRGKKFAKGKR.

This sequence belongs to the DEAD box helicase family. DDX47/RRP3 subfamily. Interacts with the SSU processome.

The protein resides in the nucleus. It carries out the reaction ATP + H2O = ADP + phosphate + H(+). Functionally, ATP-dependent rRNA helicase required for pre-ribosomal RNA processing. Involved in the maturation of the 35S-pre-rRNA and to its cleavage to mature 18S rRNA. This is ATP-dependent rRNA helicase rrp3 from Aspergillus oryzae (strain ATCC 42149 / RIB 40) (Yellow koji mold).